The sequence spans 285 residues: Small ribosomal subunit biogenesis GTPase RsgA (285 aa).

In terms of domain architecture, CP-type G spans 56–217 (DNLLIRPIVA…IIDTPGFSSI (162 aa)). GTP-binding positions include 105-108 (NKID) and 159-167 (GPSGVGKSS). Residues cysteine 241, cysteine 246, histidine 248, and cysteine 254 each coordinate Zn(2+).

Belongs to the TRAFAC class YlqF/YawG GTPase family. RsgA subfamily. As to quaternary structure, monomer. Associates with 30S ribosomal subunit, binds 16S rRNA. Requires Zn(2+) as cofactor.

It is found in the cytoplasm. One of several proteins that assist in the late maturation steps of the functional core of the 30S ribosomal subunit. Helps release RbfA from mature subunits. May play a role in the assembly of ribosomal proteins into the subunit. Circularly permuted GTPase that catalyzes slow GTP hydrolysis, GTPase activity is stimulated by the 30S ribosomal subunit. The sequence is that of Small ribosomal subunit biogenesis GTPase RsgA from Fusobacterium nucleatum subsp. nucleatum (strain ATCC 25586 / DSM 15643 / BCRC 10681 / CIP 101130 / JCM 8532 / KCTC 2640 / LMG 13131 / VPI 4355).